Here is a 180-residue protein sequence, read N- to C-terminus: Large ribosomal subunit protein uL5 (180 aa).

This sequence belongs to the universal ribosomal protein uL5 family. In terms of assembly, part of the 50S ribosomal subunit; part of the 5S rRNA/L5/L18/L25 subcomplex. Contacts the 5S rRNA and the P site tRNA. Forms a bridge to the 30S subunit in the 70S ribosome.

Functionally, this is one of the proteins that bind and probably mediate the attachment of the 5S RNA into the large ribosomal subunit, where it forms part of the central protuberance. In the 70S ribosome it contacts protein S13 of the 30S subunit (bridge B1b), connecting the 2 subunits; this bridge is implicated in subunit movement. Contacts the P site tRNA; the 5S rRNA and some of its associated proteins might help stabilize positioning of ribosome-bound tRNAs. In Symbiobacterium thermophilum (strain DSM 24528 / JCM 14929 / IAM 14863 / T), this protein is Large ribosomal subunit protein uL5.